A 938-amino-acid polypeptide reads, in one-letter code: Isoleucine--tRNA ligase (938 aa).

Positions 58–68 (PYANGSIHIGH) match the 'HIGH' region motif. N6-acetyllysine is present on K183. L-isoleucyl-5'-AMP is bound at residue E561. Residues 602 to 606 (KMSKS) carry the 'KMSKS' region motif. ATP is bound at residue K605. Positions 901, 904, 921, and 924 each coordinate Zn(2+).

The protein belongs to the class-I aminoacyl-tRNA synthetase family. IleS type 1 subfamily. Monomer. Requires Zn(2+) as cofactor.

It is found in the cytoplasm. It catalyses the reaction tRNA(Ile) + L-isoleucine + ATP = L-isoleucyl-tRNA(Ile) + AMP + diphosphate. Catalyzes the attachment of isoleucine to tRNA(Ile). As IleRS can inadvertently accommodate and process structurally similar amino acids such as valine, to avoid such errors it has two additional distinct tRNA(Ile)-dependent editing activities. One activity is designated as 'pretransfer' editing and involves the hydrolysis of activated Val-AMP. The other activity is designated 'posttransfer' editing and involves deacylation of mischarged Val-tRNA(Ile). This chain is Isoleucine--tRNA ligase, found in Escherichia fergusonii (strain ATCC 35469 / DSM 13698 / CCUG 18766 / IAM 14443 / JCM 21226 / LMG 7866 / NBRC 102419 / NCTC 12128 / CDC 0568-73).